A 138-amino-acid chain; its full sequence is Superoxide dismutase [Mn] (138 aa).

Residues His-2, His-49, Asp-133, and His-137 each contribute to the Mn(2+) site.

It belongs to the iron/manganese superoxide dismutase family. The cofactor is Mn(2+).

It catalyses the reaction 2 superoxide + 2 H(+) = H2O2 + O2. Destroys superoxide anion radicals which are normally produced within the cells and which are toxic to biological systems. The chain is Superoxide dismutase [Mn] (sodA) from Mycolicibacterium phlei (Mycobacterium phlei).